The primary structure comprises 510 residues: NAD(P)H-quinone oxidoreductase subunit 2 B, chloroplastic (510 aa).

13 helical membrane-spanning segments follow: residues Leu-24–Leu-44, Ile-57–Phe-77, Ile-99–Ile-119, Met-124–Cys-144, Ile-150–Thr-170, Tyr-183–Gly-203, Pro-227–Ala-247, Trp-295–Ile-315, Met-323–Asp-343, Gly-347–Ala-367, Ala-395–Phe-415, Leu-418–Leu-438, and Met-484–Ile-504.

It belongs to the complex I subunit 2 family. In terms of assembly, NDH is composed of at least 16 different subunits, 5 of which are encoded in the nucleus.

It localises to the plastid. The protein resides in the chloroplast thylakoid membrane. It carries out the reaction a plastoquinone + NADH + (n+1) H(+)(in) = a plastoquinol + NAD(+) + n H(+)(out). It catalyses the reaction a plastoquinone + NADPH + (n+1) H(+)(in) = a plastoquinol + NADP(+) + n H(+)(out). In terms of biological role, NDH shuttles electrons from NAD(P)H:plastoquinone, via FMN and iron-sulfur (Fe-S) centers, to quinones in the photosynthetic chain and possibly in a chloroplast respiratory chain. The immediate electron acceptor for the enzyme in this species is believed to be plastoquinone. Couples the redox reaction to proton translocation, and thus conserves the redox energy in a proton gradient. The polypeptide is NAD(P)H-quinone oxidoreductase subunit 2 B, chloroplastic (Liriodendron tulipifera (Tuliptree)).